A 203-amino-acid polypeptide reads, in one-letter code: MEHYLSLLIKSIFIENMALSFFLGMCTFLAVSKKISTAIGLGTAVIVVQTLTVPLNNLLYVYLLKDNAILWQHLGVNVDISFLGLIAYIGVIAAVVQILEMFLDKYVPALYSALGIFLPLITVNCAILAGSLFMVERNYTFQESMVYGVGSGVGWALAIAVMAGVREKMRYADVPKGLEGLGITFITAGLMAIGFMSFSGIQL.

Transmembrane regions (helical) follow at residues 11-31 (SIFI…FLAV), 35-55 (ISTA…TVPL), 82-102 (FLGL…LEMF), 115-135 (GIFL…LFMV), 145-165 (MVYG…MAGV), and 181-201 (LGIT…FSGI).

The protein belongs to the NqrDE/RnfAE family. Composed of six subunits; NqrA, NqrB, NqrC, NqrD, NqrE and NqrF.

It localises to the cell inner membrane. The catalysed reaction is a ubiquinone + n Na(+)(in) + NADH + H(+) = a ubiquinol + n Na(+)(out) + NAD(+). Its function is as follows. NQR complex catalyzes the reduction of ubiquinone-1 to ubiquinol by two successive reactions, coupled with the transport of Na(+) ions from the cytoplasm to the periplasm. NqrA to NqrE are probably involved in the second step, the conversion of ubisemiquinone to ubiquinol. The sequence is that of Na(+)-translocating NADH-quinone reductase subunit E from Dichelobacter nodosus (strain VCS1703A).